A 40-amino-acid chain; its full sequence is Photosystem II reaction center protein J (40 aa).

The helical transmembrane segment at 8-28 (IPLWLIGTVTGILVIGLIGFF) threads the bilayer.

This sequence belongs to the PsbJ family. PSII is composed of 1 copy each of membrane proteins PsbA, PsbB, PsbC, PsbD, PsbE, PsbF, PsbH, PsbI, PsbJ, PsbK, PsbL, PsbM, PsbT, PsbX, PsbY, PsbZ, Psb30/Ycf12, at least 3 peripheral proteins of the oxygen-evolving complex and a large number of cofactors. It forms dimeric complexes.

It is found in the plastid. Its subcellular location is the chloroplast thylakoid membrane. Functionally, one of the components of the core complex of photosystem II (PSII). PSII is a light-driven water:plastoquinone oxidoreductase that uses light energy to abstract electrons from H(2)O, generating O(2) and a proton gradient subsequently used for ATP formation. It consists of a core antenna complex that captures photons, and an electron transfer chain that converts photonic excitation into a charge separation. The sequence is that of Photosystem II reaction center protein J from Zea mays (Maize).